The following is a 49-amino-acid chain: Large ribosomal subunit protein bL33B (49 aa).

The protein belongs to the bacterial ribosomal protein bL33 family.

The chain is Large ribosomal subunit protein bL33B from Lactobacillus delbrueckii subsp. bulgaricus (strain ATCC BAA-365 / Lb-18).